Reading from the N-terminus, the 436-residue chain is 3-ketoacyl-CoA thiolase (436 aa).

Cys99 acts as the Acyl-thioester intermediate in catalysis. Residues His392 and Cys422 each act as proton acceptor in the active site.

It belongs to the thiolase-like superfamily. Thiolase family. Heterotetramer of two alpha chains (FadJ) and two beta chains (FadI).

It is found in the cytoplasm. It catalyses the reaction an acyl-CoA + acetyl-CoA = a 3-oxoacyl-CoA + CoA. It functions in the pathway lipid metabolism; fatty acid beta-oxidation. Functionally, catalyzes the final step of fatty acid oxidation in which acetyl-CoA is released and the CoA ester of a fatty acid two carbons shorter is formed. The polypeptide is 3-ketoacyl-CoA thiolase (Pseudoalteromonas atlantica (strain T6c / ATCC BAA-1087)).